A 433-amino-acid chain; its full sequence is Energy-coupling factor transporter ATP-binding protein EcfA2 (433 aa).

In terms of domain architecture, ABC transporter spans 25 to 389 (VRVKNLYAVY…QHIINSTSIQ (365 aa)). ATP is bound at residue 62-69 (GNSGSGKS).

The protein belongs to the ABC transporter superfamily. Energy-coupling factor EcfA family. Forms a stable energy-coupling factor (ECF) transporter complex composed of 2 membrane-embedded substrate-binding proteins (S component), 2 ATP-binding proteins (A component) and 2 transmembrane proteins (T component).

It is found in the cell membrane. ATP-binding (A) component of a common energy-coupling factor (ECF) ABC-transporter complex. Unlike classic ABC transporters this ECF transporter provides the energy necessary to transport a number of different substrates. The polypeptide is Energy-coupling factor transporter ATP-binding protein EcfA2 (Ureaplasma parvum serovar 3 (strain ATCC 700970)).